The primary structure comprises 812 residues: Leucine--tRNA ligase (812 aa).

The 'HIGH' region signature appears at 40 to 51 (SYPSGSNLHAGH). A 'KMSKS' region motif is present at residues 572-576 (KMSKS). K575 contributes to the ATP binding site.

Belongs to the class-I aminoacyl-tRNA synthetase family.

It is found in the cytoplasm. The catalysed reaction is tRNA(Leu) + L-leucine + ATP = L-leucyl-tRNA(Leu) + AMP + diphosphate. This chain is Leucine--tRNA ligase, found in Clostridium tetani (strain Massachusetts / E88).